The following is a 426-amino-acid chain: Glutamate-1-semialdehyde 2,1-aminomutase (426 aa).

Lys-265 is subject to N6-(pyridoxal phosphate)lysine.

It belongs to the class-III pyridoxal-phosphate-dependent aminotransferase family. HemL subfamily. Homodimer. Requires pyridoxal 5'-phosphate as cofactor.

The protein resides in the cytoplasm. It carries out the reaction (S)-4-amino-5-oxopentanoate = 5-aminolevulinate. The protein operates within porphyrin-containing compound metabolism; protoporphyrin-IX biosynthesis; 5-aminolevulinate from L-glutamyl-tRNA(Glu): step 2/2. This chain is Glutamate-1-semialdehyde 2,1-aminomutase, found in Salmonella paratyphi A (strain ATCC 9150 / SARB42).